We begin with the raw amino-acid sequence, 491 residues long: Proline--tRNA ligase (491 aa).

It belongs to the class-II aminoacyl-tRNA synthetase family. ProS type 3 subfamily. As to quaternary structure, homodimer.

Its subcellular location is the cytoplasm. It carries out the reaction tRNA(Pro) + L-proline + ATP = L-prolyl-tRNA(Pro) + AMP + diphosphate. Catalyzes the attachment of proline to tRNA(Pro) in a two-step reaction: proline is first activated by ATP to form Pro-AMP and then transferred to the acceptor end of tRNA(Pro). The chain is Proline--tRNA ligase from Cytophaga hutchinsonii (strain ATCC 33406 / DSM 1761 / CIP 103989 / NBRC 15051 / NCIMB 9469 / D465).